The following is a 1035-amino-acid chain: Putative protein FAM47C (1035 aa).

2 disordered regions span residues 1–21 and 159–797; these read MGDQ…TPWY and LEDA…RRVS. The segment covering 159–173 has biased composition (basic and acidic residues); that stretch reads LEDAGSCEGQEKTTD. The segment covering 380–392 has biased composition (pro residues); sequence PEPPKTRVPPLRP. Basic and acidic residues predominate over residues 478-490; that stretch reads PPEKDVSHLRPEP. Residues 533–544 are compositionally biased toward polar residues; that stretch reads SLHQAPPESSVS. Basic and acidic residues-rich tracts occupy residues 611–622, 683–694, and 753–766; these read PETRVSHLRPEP and EPLE…RPEP.

The protein belongs to the FAM47 family.

This chain is Putative protein FAM47C (FAM47C), found in Homo sapiens (Human).